Reading from the N-terminus, the 496-residue chain is Thiamine transporter 2 (496 aa).

The Cytoplasmic portion of the chain corresponds to 1-7 (MDCYRTS). The chain crosses the membrane as a helical span at residues 8 to 28 (PSNSWIYTTVILCIFGFFSMM). At 29–53 (RPSEPFLIPYLSGPDKNLTSEEMTN) the chain is on the extracellular side. The N-linked (GlcNAc...) asparagine glycan is linked to asparagine 45. The helical transmembrane segment at 54–74 (EIFPVWTYSYLVLLLPVLVLT) threads the bilayer. The Cytoplasmic portion of the chain corresponds to 75–81 (DYVRYKP). The helical transmembrane segment at 82 to 102 (VIILQGISFIITWLLLLFGQG) threads the bilayer. Residues 103–110 (VKTMQVVE) lie on the Extracellular side of the membrane. The chain crosses the membrane as a helical span at residues 111–131 (FFYGMVTATEVAYYAYIYSVV). Residues 132–144 (SPEHYQRVSGYCR) are Cytoplasmic-facing. Residues 145 to 165 (SVTLVAYTAGSVLAQLLVSLA) form a helical membrane-spanning segment. An N-linked (GlcNAc...) asparagine glycan is attached at asparagine 166. Topologically, residues 166–169 (NLSY) are extracellular. A helical membrane pass occupies residues 170–190 (FYLNVISLASVSVAFLFSLFL). The Cytoplasmic segment spans residues 191–282 (PMPKKSMFFH…YSSKRLFYWS (92 aa)). The segment at 210–248 (SSSVNPVLEETHEGEAPDCEKQKPTSEIPSTSGKLHKGQ) is disordered. Over residues 218 to 233 (EETHEGEAPDCEKQKP) the composition is skewed to basic and acidic residues. Residues 234–248 (TSEIPSTSGKLHKGQ) are compositionally biased toward polar residues. A helical transmembrane segment spans residues 283–303 (LWWAFATAGFNQILNYVQILW). At 304–316 (DYKSPSQDSSIYN) the chain is on the extracellular side. The helical transmembrane segment at 317–337 (GAVEATATFGGAVAAFAVGYV) threads the bilayer. The Cytoplasmic portion of the chain corresponds to 338 to 342 (KVNWD). The chain crosses the membrane as a helical span at residues 343 to 363 (LLGELALAVFSVVNAGSLFLM). The Extracellular portion of the chain corresponds to 364-375 (HYTANIWACYAG). Residues 376-396 (YLIFKSSYMLLITIAVFQIAV) form a helical membrane-spanning segment. Residues 397–405 (NLSVERYAL) lie on the Cytoplasmic side of the membrane. A helical membrane pass occupies residues 406-426 (VFGINTFIALVIQTIITVIVV). The Extracellular portion of the chain corresponds to 427 to 434 (DQRGLNLP). The helical transmembrane segment at 435–455 (ISIQFLVYGSYFAVIAGIFLM) threads the bilayer. Residues 456–496 (RSMYIIYSTKSQKDVQSPAPSENPDMSHPEEESNAIMSTKL) are Cytoplasmic-facing. The segment at 469-496 (DVQSPAPSENPDMSHPEEESNAIMSTKL) is disordered.

This sequence belongs to the reduced folate carrier (RFC) transporter (TC 2.A.48) family.

It localises to the membrane. The catalysed reaction is thiamine(out) + H(+)(in) = thiamine(in) + H(+)(out). The enzyme catalyses pyridoxine(out) + n H(+)(out) = pyridoxine(in) + n H(+)(in). Its function is as follows. Mediates high affinity thiamine uptake, probably via a proton anti-port mechanism. Has no folate transport activity. Mediates H(+)-dependent pyridoxine transport. The polypeptide is Thiamine transporter 2 (SLC19A3) (Macaca fascicularis (Crab-eating macaque)).